The sequence spans 158 residues: Glutathione peroxidase-like peroxiredoxin gpx1 (158 aa).

Cys36 acts as the Cysteine sulfenic acid (-SOH) intermediate in catalysis. A disulfide bridge connects residues Cys36 and Cys82.

Belongs to the glutathione peroxidase family. Monomer.

It localises to the cytoplasm. It is found in the mitochondrion. The enzyme catalyses a hydroperoxide + [thioredoxin]-dithiol = an alcohol + [thioredoxin]-disulfide + H2O. Glutathione peroxidase-like protein that protects cells during oxidative stress. Has peroxidase activity reducing hydrogen peroxide, alkyl and phospholipid hydroperoxides using preferentially thioredoxin as a reducing power. May act as a scavenger of H(2)O(2). This chain is Glutathione peroxidase-like peroxiredoxin gpx1, found in Schizosaccharomyces pombe (strain 972 / ATCC 24843) (Fission yeast).